The following is a 444-amino-acid chain: Tryptophan 5-hydroxylase 1 (444 aa).

The ACT domain maps to 19–94 (TLIFSLKNEV…NVLSVTPPDN (76 aa)). Ser58 is subject to Phosphoserine; by PKA. Positions 235, 257, and 265 each coordinate L-tryptophan. Fe cation is bound by residues His272, His277, and Glu317. Residues Ser336 and Ile366 each contribute to the L-tryptophan site.

It belongs to the biopterin-dependent aromatic amino acid hydroxylase family. Homotetramer. Interacts with DNAJC12. Fe(2+) serves as cofactor. In terms of processing, ubiquitinated, leading to its degradation by the proteasome. Ubiquitinated is triggered by phosphorylation. Phosphorylated; triggering degradation by the proteasome.

The enzyme catalyses (6R)-L-erythro-5,6,7,8-tetrahydrobiopterin + L-tryptophan + O2 = 5-hydroxy-L-tryptophan + (4aS,6R)-4a-hydroxy-L-erythro-5,6,7,8-tetrahydrobiopterin. Its pathway is aromatic compound metabolism; serotonin biosynthesis; serotonin from L-tryptophan: step 1/2. In terms of biological role, oxidizes L-tryptophan to 5-hydroxy-l-tryptophan in the rate-determining step of serotonin biosynthesis. The chain is Tryptophan 5-hydroxylase 1 (TPH1) from Oryctolagus cuniculus (Rabbit).